The chain runs to 238 residues: Peroxisomal coenzyme A diphosphatase NUDT7 (238 aa).

Lys-20 carries the N6-succinyllysine modification. Residues 37 to 172 form the Nudix hydrolase domain; sequence YNKYSVLLPL…VTRLGHRFIN (136 aa). Positions 77–98 match the Nudix box motif; it reads KRDPTDMDDAATALREAQEEVG. Mg(2+)-binding residues include Glu-92 and Glu-96. The Microbody targeting signal signature appears at 236-238; sequence SRL.

This sequence belongs to the Nudix hydrolase family. PCD1 subfamily. As to quaternary structure, monomer. Mn(2+) serves as cofactor. The cofactor is Mg(2+). As to expression, expressed in liver, kidney, pancreas, pituitary, small intestine, spleen, heart and placenta. Weakly expressed in brain.

It localises to the peroxisome. It carries out the reaction hexanoyl-CoA + H2O = hexanoyl-4'-phosphopantetheine + adenosine 3',5'-bisphosphate + 2 H(+). The catalysed reaction is octanoyl-CoA + H2O = S-octanoyl-4'-phosphopantetheine + adenosine 3',5'-bisphosphate + 2 H(+). It catalyses the reaction butanoyl-CoA + H2O = S-butanoyl-4'-phosphopantetheine + adenosine 3',5'-bisphosphate + 2 H(+). The enzyme catalyses decanoyl-CoA + H2O = decanoyl-4'-phosphopantetheine + adenosine 3',5'-bisphosphate + 2 H(+). It carries out the reaction dodecanoyl-CoA + H2O = S-dodecanoyl-4'-phosphopantetheine + adenosine 3',5'-bisphosphate + 2 H(+). The catalysed reaction is tetradecanoyl-CoA + H2O = tetradecanoyl-4'-phosphopantetheine + adenosine 3',5'-bisphosphate + 2 H(+). It catalyses the reaction choloyl-CoA + H2O = S-choloyl-4'-phosphopantetheine + adenosine 3',5'-bisphosphate + 2 H(+). The enzyme catalyses 3alpha,7alpha,12alpha-trihydroxy-5beta-cholestan-26-oyl-CoA + H2O = 3alpha,7alpha,12alpha-trihydroxy-5beta-cholestan-26-oyl-4'-phosphopantetheine + adenosine 3',5'-bisphosphate + 2 H(+). It carries out the reaction acetyl-CoA + H2O = S-acetyl-4'-phosphopantetheine + adenosine 3',5'-bisphosphate + 2 H(+). The catalysed reaction is CoA + H2O = (R)-4'-phosphopantetheine + adenosine 3',5'-bisphosphate + 2 H(+). It catalyses the reaction propanoyl-CoA + H2O = propanoyl-4'-phosphopantetheine + adenosine 3',5'-bisphosphate + 2 H(+). The enzyme catalyses malonyl-CoA + H2O = malonyl-4'-phosphopantetheine + adenosine 3',5'-bisphosphate + 2 H(+). It carries out the reaction succinyl-CoA + H2O = succinyl-4'-phosphopantetheine + adenosine 3',5'-bisphosphate + 2 H(+). The catalysed reaction is a 5'-end CoA-ribonucleoside in mRNA + H2O = a 5'-end phospho-adenosine-phospho-ribonucleoside in mRNA + (R)-4'-phosphopantetheine + 2 H(+). Its activity is regulated as follows. Inhibited by fluoride. Its function is as follows. Fatty acyl-coenzyme A (CoA) diphosphatase that hydrolyzes fatty acyl-CoA to yield acyl-4'-phosphopantetheine and adenosine 3',5'-bisphosphate. Cleaves CoA, CoA esters and oxidized CoA with similar efficiencies. Preferentially hydrolyzes medium-chain acyl-CoAs and bile acid-CoAs. Has no activity toward NDP-sugars, CDP-alcohols, (deoxy)nucleoside 5'-triphosphates, nucleoside 5'-di or monophosphates, diadenosine polyphosphates, NAD, NADH, NADP, NADPH or thymidine-5'-monophospho-p-nitrophenyl ester. May be required to eliminate oxidized CoA from peroxisomes, or regulate CoA and acyl-CoA levels in this organelle in response to metabolic demand. Does not play a role in U8 snoRNA decapping activity. Binds U8 snoRNA. Exhibits decapping activity towards dpCoA-capped RNAs in vitro. This Homo sapiens (Human) protein is Peroxisomal coenzyme A diphosphatase NUDT7.